The chain runs to 158 residues: Small ribosomal subunit protein uS7 (158 aa).

It belongs to the universal ribosomal protein uS7 family. As to quaternary structure, part of the 30S ribosomal subunit. Contacts proteins S9 and S11.

Its function is as follows. One of the primary rRNA binding proteins, it binds directly to 16S rRNA where it nucleates assembly of the head domain of the 30S subunit. Is located at the subunit interface close to the decoding center, probably blocks exit of the E-site tRNA. The protein is Small ribosomal subunit protein uS7 of Porphyromonas gingivalis (strain ATCC BAA-308 / W83).